Reading from the N-terminus, the 280-residue chain is Cytochrome bc1 complex cytochrome c subunit (280 aa).

A helical transmembrane segment spans residues 25–45 (LSGGVLLLIALTIAGGLAAVL). Cytochrome c domains are found at residues 60–140 (ALLR…QANG) and 161–239 (NDLG…KVAT). The heme c site is built by Cys73, Cys76, His77, Cys174, Cys177, and His178. The chain crosses the membrane as a helical span at residues 258–278 (GMAMWIIGMVAAIGLALWIGA).

As to quaternary structure, the cytochrome bc1 complex is composed of a cytochrome b (QcrB), the Rieske iron-sulfur protein (QcrA) and a diheme cytochrome c (QcrC) subunit. Post-translationally, binds 2 heme c groups covalently per subunit.

The protein localises to the cell membrane. It catalyses the reaction a quinol + 2 Fe(III)-[cytochrome c](out) = a quinone + 2 Fe(II)-[cytochrome c](out) + 2 H(+)(out). Functionally, cytochrome b subunit of the cytochrome bc1 complex, an essential component of the respiratory electron transport chain required for ATP synthesis. The bc1 complex catalyzes the oxidation of ubiquinol and the reduction of cytochrome c in the respiratory chain. The bc1 complex operates through a Q-cycle mechanism that couples electron transfer to generation of the proton gradient that drives ATP synthesis. The sequence is that of Cytochrome bc1 complex cytochrome c subunit (qcrC) from Mycobacterium bovis (strain ATCC BAA-935 / AF2122/97).